The primary structure comprises 263 residues: Phosphatidylglycerol--prolipoprotein diacylglyceryl transferase (263 aa).

4 helical membrane-spanning segments follow: residues 10-30 (VAIT…LFGF), 56-76 (MVTY…ILFY), 91-111 (IWNG…AMWL), and 117-137 (GLGF…GLFF). Arginine 139 contributes to the a 1,2-diacyl-sn-glycero-3-phospho-(1'-sn-glycerol) binding site. Transmembrane regions (helical) follow at residues 171–191 (PSQL…LWVF), 199–219 (GHVS…VEFV), and 231–251 (FGWL…GLWL).

Belongs to the Lgt family.

It localises to the cell inner membrane. It carries out the reaction L-cysteinyl-[prolipoprotein] + a 1,2-diacyl-sn-glycero-3-phospho-(1'-sn-glycerol) = an S-1,2-diacyl-sn-glyceryl-L-cysteinyl-[prolipoprotein] + sn-glycerol 1-phosphate + H(+). The protein operates within protein modification; lipoprotein biosynthesis (diacylglyceryl transfer). Its function is as follows. Catalyzes the transfer of the diacylglyceryl group from phosphatidylglycerol to the sulfhydryl group of the N-terminal cysteine of a prolipoprotein, the first step in the formation of mature lipoproteins. The chain is Phosphatidylglycerol--prolipoprotein diacylglyceryl transferase from Nitratidesulfovibrio vulgaris (strain ATCC 29579 / DSM 644 / CCUG 34227 / NCIMB 8303 / VKM B-1760 / Hildenborough) (Desulfovibrio vulgaris).